Reading from the N-terminus, the 521-residue chain is Histone deacetylase HDAC1 (521 aa).

The segment at Lys-7–Ala-319 is histone deacetylase. Residue His-139 is part of the active site. The tract at residues Gly-376 to Ile-521 is disordered. The span at Ala-386–Asp-395 shows a compositional bias: acidic residues. Ser-391 bears the Phosphoserine mark. Basic and acidic residues predominate over residues Lys-396–Pro-414. 3 positions are modified to phosphoserine: Ser-419, Ser-421, and Ser-455. Thr-457 bears the Phosphothreonine mark. The segment covering Ser-459 to Gly-470 has biased composition (basic and acidic residues). Residues Ser-476–Gly-502 show a composition bias toward low complexity. The span at Ser-503–Ala-513 shows a compositional bias: gly residues.

This sequence belongs to the histone deacetylase family. HD type 1 subfamily. As to quaternary structure, component of a form of the Esc/E(z) complex present specifically during early embryogenesis which is composed of Caf1-55, esc, E(z), Su(z)12, Pcl and HDAC1. The Esc/E(z) complex may also associate with Pcl and HDAC1 during early embryogenesis. This complex is distinct from the PRC1 complex, which contains many other PcG proteins like Pc, Ph, Psc, Su(z)2. The 2 complexes however cooperate and interact together during the first 3 hours of development to establish PcG silencing. Interacts with the histone methyltransferase Su(var)3-9. Component of a complex that contains at least HDAC1, CoRest and Su(var)3-3/Hdm. Component of the DREAM complex at least composed of Myb, Caf1-55, mip40, mip120, mip130, E2f2, Dp, Rbf, Rbf2, lin-52, HDAC1 and l(3)mbt. Interacts with the chromatin-remodeler Mi-2. Interacts with Rrp6.

The protein resides in the nucleus. It catalyses the reaction N(6)-acetyl-L-lysyl-[histone] + H2O = L-lysyl-[histone] + acetate. In terms of biological role, catalyzes the deacetylation of lysine residues on the N-terminal part of the core histones (H2A, H2B, H3 and H4). Histone deacetylation may constitute a tag for epigenetic repression and plays an important role in transcriptional regulation, cell cycle progression and developmental events. For instance, deacetylation of histone H3 may be a prerequisite for the subsequent recruitment of the histone methyltransferase Su(var)3-9 to histones. Involved in position-effect variegation (PEV). In the larval brain, part of a regulatory network including the transcriptional repressors klu, dpn and E(spl)mgamma-HLH which is required for type II neuroblast self-renewal and for maintaining erm in an inactive state in intermediate neural progenitors (INP). The chain is Histone deacetylase HDAC1 from Drosophila melanogaster (Fruit fly).